We begin with the raw amino-acid sequence, 149 residues long: 3-dehydroquinate dehydratase (149 aa).

Y23 serves as the catalytic Proton acceptor. 3 residues coordinate substrate: N75, H81, and D88. H101 serves as the catalytic Proton donor. Residues 102 to 103 and R112 each bind substrate; that span reads MS.

It belongs to the type-II 3-dehydroquinase family. Homododecamer.

It carries out the reaction 3-dehydroquinate = 3-dehydroshikimate + H2O. The protein operates within metabolic intermediate biosynthesis; chorismate biosynthesis; chorismate from D-erythrose 4-phosphate and phosphoenolpyruvate: step 3/7. Its function is as follows. Catalyzes a trans-dehydration via an enolate intermediate. This Pelobacter propionicus (strain DSM 2379 / NBRC 103807 / OttBd1) protein is 3-dehydroquinate dehydratase.